Consider the following 120-residue polypeptide: Large ribosomal subunit protein bL12 (120 aa).

Belongs to the bacterial ribosomal protein bL12 family. In terms of assembly, homodimer. Part of the ribosomal stalk of the 50S ribosomal subunit. Forms a multimeric L10(L12)X complex, where L10 forms an elongated spine to which 2 to 4 L12 dimers bind in a sequential fashion. Binds GTP-bound translation factors.

In terms of biological role, forms part of the ribosomal stalk which helps the ribosome interact with GTP-bound translation factors. Is thus essential for accurate translation. This is Large ribosomal subunit protein bL12 from Listeria welshimeri serovar 6b (strain ATCC 35897 / DSM 20650 / CCUG 15529 / CIP 8149 / NCTC 11857 / SLCC 5334 / V8).